We begin with the raw amino-acid sequence, 261 residues long: UPF0328 protein ECU06_0100 (261 aa).

This sequence belongs to the UPF0328 family.

In Encephalitozoon cuniculi (strain GB-M1) (Microsporidian parasite), this protein is UPF0328 protein ECU06_0100.